The sequence spans 315 residues: Lipoyl synthase (315 aa).

7 residues coordinate [4Fe-4S] cluster: Cys62, Cys67, Cys73, Cys88, Cys92, Cys95, and Ser302. The 219-residue stretch at 73 to 291 (CFGHGTATFM…GELAKKLGFS (219 aa)) folds into the Radical SAM core domain.

The protein belongs to the radical SAM superfamily. Lipoyl synthase family. Requires [4Fe-4S] cluster as cofactor.

It is found in the cytoplasm. The catalysed reaction is [[Fe-S] cluster scaffold protein carrying a second [4Fe-4S](2+) cluster] + N(6)-octanoyl-L-lysyl-[protein] + 2 oxidized [2Fe-2S]-[ferredoxin] + 2 S-adenosyl-L-methionine + 4 H(+) = [[Fe-S] cluster scaffold protein] + N(6)-[(R)-dihydrolipoyl]-L-lysyl-[protein] + 4 Fe(3+) + 2 hydrogen sulfide + 2 5'-deoxyadenosine + 2 L-methionine + 2 reduced [2Fe-2S]-[ferredoxin]. Its pathway is protein modification; protein lipoylation via endogenous pathway; protein N(6)-(lipoyl)lysine from octanoyl-[acyl-carrier-protein]: step 2/2. Its function is as follows. Catalyzes the radical-mediated insertion of two sulfur atoms into the C-6 and C-8 positions of the octanoyl moiety bound to the lipoyl domains of lipoate-dependent enzymes, thereby converting the octanoylated domains into lipoylated derivatives. The sequence is that of Lipoyl synthase from Coxiella burnetii (strain CbuG_Q212) (Coxiella burnetii (strain Q212)).